We begin with the raw amino-acid sequence, 443 residues long: Cobyrinate a,c-diamide synthase (443 aa).

A GATase cobBQ-type domain is found at 248–433 (KIAVAYDKAF…LHNHAVANPY (186 aa)). Cysteine 327 acts as the Nucleophile in catalysis.

Belongs to the CobB/CbiA family. Requires Mg(2+) as cofactor.

The catalysed reaction is cob(II)yrinate + 2 L-glutamine + 2 ATP + 2 H2O = cob(II)yrinate a,c diamide + 2 L-glutamate + 2 ADP + 2 phosphate + 2 H(+). The enzyme catalyses Ni-sirohydrochlorin + 2 L-glutamine + 2 ATP + 2 H2O = Ni-sirohydrochlorin a,c-diamide + 2 L-glutamate + 2 ADP + 2 phosphate + 2 H(+). It functions in the pathway cofactor biosynthesis; adenosylcobalamin biosynthesis; cob(II)yrinate a,c-diamide from sirohydrochlorin (anaerobic route): step 10/10. Functionally, catalyzes the ATP-dependent amidation of the two carboxylate groups at positions a and c of cobyrinate, using either L-glutamine or ammonia as the nitrogen source. Involved in the biosynthesis of the unique nickel-containing tetrapyrrole coenzyme F430, the prosthetic group of methyl-coenzyme M reductase (MCR), which plays a key role in methanogenesis and anaerobic methane oxidation. Catalyzes the ATP-dependent amidation of the two carboxylate groups at positions a and c of Ni-sirohydrochlorin, using L-glutamine or ammonia as the nitrogen source. The sequence is that of Cobyrinate a,c-diamide synthase from Methanocaldococcus jannaschii (strain ATCC 43067 / DSM 2661 / JAL-1 / JCM 10045 / NBRC 100440) (Methanococcus jannaschii).